We begin with the raw amino-acid sequence, 273 residues long: Orotidine 5'-phosphate decarboxylase (273 aa).

Lysine 97 serves as the catalytic Proton donor.

This sequence belongs to the OMP decarboxylase family. Type 2 subfamily.

The catalysed reaction is orotidine 5'-phosphate + H(+) = UMP + CO2. The protein operates within pyrimidine metabolism; UMP biosynthesis via de novo pathway; UMP from orotate: step 2/2. This Cellvibrio japonicus (strain Ueda107) (Pseudomonas fluorescens subsp. cellulosa) protein is Orotidine 5'-phosphate decarboxylase.